Consider the following 874-residue polypeptide: Protein translocase subunit SecA (874 aa).

ATP-binding positions include Gln85, Gly103–Thr107, and Asp492. A compositionally biased stretch (basic and acidic residues) spans Glu839–Arg854. The tract at residues Glu839 to Lys864 is disordered. Zn(2+)-binding residues include Cys858, Cys860, Cys869, and Cys870.

It belongs to the SecA family. Monomer and homodimer. Part of the essential Sec protein translocation apparatus which comprises SecA, SecYEG and auxiliary proteins SecDF. Other proteins may also be involved. It depends on Zn(2+) as a cofactor.

It localises to the cell membrane. Its subcellular location is the cytoplasm. It carries out the reaction ATP + H2O + cellular proteinSide 1 = ADP + phosphate + cellular proteinSide 2.. In terms of biological role, part of the Sec protein translocase complex. Interacts with the SecYEG preprotein conducting channel. Has a central role in coupling the hydrolysis of ATP to the transfer of proteins into and across the cell membrane, serving as an ATP-driven molecular motor driving the stepwise translocation of polypeptide chains across the membrane. The protein is Protein translocase subunit SecA of Carboxydothermus hydrogenoformans (strain ATCC BAA-161 / DSM 6008 / Z-2901).